The chain runs to 428 residues: GTPase Obg (428 aa).

Residues M1–L158 form the Obg domain. Positions A159–E328 constitute an OBG-type G domain. GTP is bound by residues G165–S172, F190–T194, D212–G215, T282–D285, and S309–V311. 2 residues coordinate Mg(2+): S172 and T192. The OCT domain occupies Y350–D428.

The protein belongs to the TRAFAC class OBG-HflX-like GTPase superfamily. OBG GTPase family. As to quaternary structure, monomer. Mg(2+) is required as a cofactor.

Its subcellular location is the cytoplasm. An essential GTPase which binds GTP, GDP and possibly (p)ppGpp with moderate affinity, with high nucleotide exchange rates and a fairly low GTP hydrolysis rate. Plays a role in control of the cell cycle, stress response, ribosome biogenesis and in those bacteria that undergo differentiation, in morphogenesis control. This Lactobacillus gasseri (strain ATCC 33323 / DSM 20243 / BCRC 14619 / CIP 102991 / JCM 1131 / KCTC 3163 / NCIMB 11718 / NCTC 13722 / AM63) protein is GTPase Obg.